Consider the following 393-residue polypeptide: MGYYSLTEVTAVQYAKEHGYFEKKANVVCHEIGDGNLNYVFKLDDGEKSIIIKQALPYAKVVGESWPLSIKRATIESKALQIFAKYVPEYVPVVYSHDEELAVTVIEDLSRLTITRKGLIDGEEYPLLSQHIGRFLANVLFYTSDFGLQSEEKRVLEGTFVNPDLCKITEDLVFTDPFGHYDTNDYEPELQLTIDELWSDKTLKLKVAQYKYKFLTRKEALIHGDLHTGSIFSSPSETKVIDPEFATYGPFGFDIGQFIANLLLNALSREEEQRGVLFFHIEKTWSYFVETFTKLWIGEGVEAYTKEKQWLPIILQNIFTDTVGFAGCELIRRTIGLAHVADLDEITNKETRIQAKKQALSLGKELIKYESKNADIQLFRTLFQQTVSGGIKA.

ATP contacts are provided by residues Asn-38, Lys-53, and 107-109 (EDL). Asp-225 is a substrate binding site. 242 to 244 (DPE) contacts ATP. Arg-332 lines the substrate pocket.

This sequence belongs to the methylthioribose kinase family. As to quaternary structure, homodimer.

It catalyses the reaction 5-(methylsulfanyl)-D-ribose + ATP = 5-(methylsulfanyl)-alpha-D-ribose 1-phosphate + ADP + H(+). It functions in the pathway amino-acid biosynthesis; L-methionine biosynthesis via salvage pathway; S-methyl-5-thio-alpha-D-ribose 1-phosphate from S-methyl-5'-thioadenosine (hydrolase route): step 2/2. Functionally, catalyzes the phosphorylation of methylthioribose into methylthioribose-1-phosphate. The polypeptide is Methylthioribose kinase (Bacillus cereus (strain 03BB102)).